The sequence spans 334 residues: ADP-L-glycero-D-manno-heptose-6-epimerase (334 aa).

NADP(+)-binding positions include 11 to 12 (FI), 32 to 33 (DN), Lys39, Lys54, 77 to 81 (QGACS), and Asn94. Tyr141 functions as the Proton acceptor in the catalytic mechanism. Lys145 is a binding site for NADP(+). Asn171 is a binding site for substrate. Positions 172 and 180 each coordinate NADP(+). The active-site Proton acceptor is Lys180. Substrate-binding positions include Arg182, His189, 203–206 (FGSN), Arg216, and Tyr295.

The protein belongs to the NAD(P)-dependent epimerase/dehydratase family. HldD subfamily. As to quaternary structure, homopentamer. NADP(+) is required as a cofactor.

The catalysed reaction is ADP-D-glycero-beta-D-manno-heptose = ADP-L-glycero-beta-D-manno-heptose. Its pathway is nucleotide-sugar biosynthesis; ADP-L-glycero-beta-D-manno-heptose biosynthesis; ADP-L-glycero-beta-D-manno-heptose from D-glycero-beta-D-manno-heptose 7-phosphate: step 4/4. The protein operates within bacterial outer membrane biogenesis; LOS core biosynthesis. In terms of biological role, catalyzes the interconversion between ADP-D-glycero-beta-D-manno-heptose and ADP-L-glycero-beta-D-manno-heptose via an epimerization at carbon 6 of the heptose. This is ADP-L-glycero-D-manno-heptose-6-epimerase from Neisseria meningitidis serogroup A / serotype 4A (strain DSM 15465 / Z2491).